The following is a 157-amino-acid chain: Lectin (157 aa).

A disulfide bridge links Cys37 with Cys54.

In terms of assembly, homodimer. As to expression, detected in fruits (at protein level).

It is found in the secreted. In terms of biological role, binds with high affinity specifically to chito-oligosaccharides. May play a role in plant defense against pathogens by directly binding with the chitin cell wall. Forms filamentous structures at higher concentrations and may promote wound healing by forming filaments with phloem proteins like PP1. In Coccinia grandis (Ivy gourd), this protein is Lectin.